Reading from the N-terminus, the 160-residue chain is Transcriptional repressor NrdR (160 aa).

The segment at 3–34 is a zinc-finger region; that stretch reads CPYCQCEDTQVKDSRPAEEGAVIRRRRVCSVC. The ATP-cone domain occupies 49–139; sequence LLVLKKSGRR…VYRDFRNASD (91 aa).

Belongs to the NrdR family. Requires Zn(2+) as cofactor.

In terms of biological role, negatively regulates transcription of bacterial ribonucleotide reductase nrd genes and operons by binding to NrdR-boxes. This is Transcriptional repressor NrdR from Bartonella bacilliformis (strain ATCC 35685 / KC583 / Herrer 020/F12,63).